A 388-amino-acid polypeptide reads, in one-letter code: Succinate--CoA ligase [ADP-forming] subunit beta (388 aa).

Positions 9–244 constitute an ATP-grasp domain; it reads KQLFAEYGLP…PSQEDEREAH (236 aa). ATP-binding positions include K46, 53 to 55, E99, T102, and E107; that span reads GRG. The Mg(2+) site is built by N199 and D213. Substrate-binding positions include N264 and 321-323; that span reads GIV.

This sequence belongs to the succinate/malate CoA ligase beta subunit family. As to quaternary structure, heterotetramer of two alpha and two beta subunits. It depends on Mg(2+) as a cofactor.

It catalyses the reaction succinate + ATP + CoA = succinyl-CoA + ADP + phosphate. The enzyme catalyses GTP + succinate + CoA = succinyl-CoA + GDP + phosphate. It participates in carbohydrate metabolism; tricarboxylic acid cycle; succinate from succinyl-CoA (ligase route): step 1/1. Functionally, succinyl-CoA synthetase functions in the citric acid cycle (TCA), coupling the hydrolysis of succinyl-CoA to the synthesis of either ATP or GTP and thus represents the only step of substrate-level phosphorylation in the TCA. The beta subunit provides nucleotide specificity of the enzyme and binds the substrate succinate, while the binding sites for coenzyme A and phosphate are found in the alpha subunit. This is Succinate--CoA ligase [ADP-forming] subunit beta from Colwellia psychrerythraea (strain 34H / ATCC BAA-681) (Vibrio psychroerythus).